Here is a 228-residue protein sequence, read N- to C-terminus: MTFTLRLLVLCTVYSYVISQCDDNGVIYTNGDKWIRNNHFLVTCRDGNIQTLKCVTDSGHLLEVGSKSYVENGYEYMCAREVTDNLNTNTCPTFADFSDDIFKDRFAICCISRRFKGCVDANGDIVKSGFFVIGNKSLKYCRIQANQLQARIEPKGCFNGTEKDDVNDEELHIKKYAVWREGDIEYRCGDDGVHIQRCFPPELKKKAIWAGTAWIQEDGQVKTCGKIN.

A signal peptide spans 1–19 (MTFTLRLLVLCTVYSYVIS). Asn-135 and Asn-159 each carry an N-linked (GlcNAc...) asparagine glycan.

Expressed in body wall muscle.

It localises to the secreted. The protein resides in the extracellular space. It is found in the extracellular matrix. The protein localises to the basement membrane. Its function is as follows. Required for the directional control of distal tip cell migration during gonadogenesis, probably by recruiting fibulin fbl-1 to the gonad basement membrane. The sequence is that of Abnormal cell migration protein 18 from Caenorhabditis elegans.